The chain runs to 179 residues: Fas apoptotic inhibitory molecule 1 (179 aa).

The residue at position 2 (threonine 2) is an N-acetylthreonine.

It belongs to the FAIM1 family. Widely expressed, with the highest levels in brain, thymus, kidney, and spleen.

The protein resides in the cytoplasm. Its function is as follows. Plays a role as an inducible effector molecule that mediates Fas resistance produced by surface Ig engagement in B cells. The chain is Fas apoptotic inhibitory molecule 1 (Faim) from Mus musculus (Mouse).